Here is a 29-residue protein sequence, read N- to C-terminus: Cytochrome b6-f complex subunit 8 (29 aa).

Residues Ile3–Val23 form a helical membrane-spanning segment.

It belongs to the PetN family. The 4 large subunits of the cytochrome b6-f complex are cytochrome b6, subunit IV (17 kDa polypeptide, PetD), cytochrome f and the Rieske protein, while the 4 small subunits are PetG, PetL, PetM and PetN. The complex functions as a dimer.

It localises to the plastid. The protein localises to the chloroplast thylakoid membrane. Component of the cytochrome b6-f complex, which mediates electron transfer between photosystem II (PSII) and photosystem I (PSI), cyclic electron flow around PSI, and state transitions. The sequence is that of Cytochrome b6-f complex subunit 8 from Coffea arabica (Arabian coffee).